Consider the following 500-residue polypeptide: Probable cytosol aminopeptidase (500 aa).

Positions 261 and 266 each coordinate Mn(2+). Lys-273 is an active-site residue. Mn(2+)-binding residues include Asp-284, Asp-343, and Glu-345. Arg-347 is a catalytic residue.

The protein belongs to the peptidase M17 family. Mn(2+) serves as cofactor.

The protein localises to the cytoplasm. The enzyme catalyses Release of an N-terminal amino acid, Xaa-|-Yaa-, in which Xaa is preferably Leu, but may be other amino acids including Pro although not Arg or Lys, and Yaa may be Pro. Amino acid amides and methyl esters are also readily hydrolyzed, but rates on arylamides are exceedingly low.. The catalysed reaction is Release of an N-terminal amino acid, preferentially leucine, but not glutamic or aspartic acids.. Presumably involved in the processing and regular turnover of intracellular proteins. Catalyzes the removal of unsubstituted N-terminal amino acids from various peptides. In Bacillus subtilis (strain 168), this protein is Probable cytosol aminopeptidase (pepA).